The following is a 590-amino-acid chain: Negative elongation factor D (590 aa).

A disordered region spans residues 15–43 (YGSAAEWGDEADGGQQEDDSGEGEDDAEV). The span at 21–43 (WGDEADGGQQEDDSGEGEDDAEV) shows a compositional bias: acidic residues.

It belongs to the NELF-D family. The NELF complex is composed of NELFA, NELFB, NELFCD and NELFE; NELFA and NELFCD form a stable subcomplex that binds primarily through NELFCD to the N-terminus of NELFB. Binds RNA which may help to stabilize the NELF complex on nucleic acid. In vitro, the NELFA:NELFCD subcomplex binds to ssDNA and ssRNA in a sequence- and structure-dependent manner. Interacts with ARAF1. Interacts with PCF11. Interacts with NELFB. Interacts with KAT8.

It localises to the nucleus. In terms of biological role, essential component of the NELF complex, a complex that negatively regulates the elongation of transcription by RNA polymerase II. The NELF complex, which acts via an association with the DSIF complex and causes transcriptional pausing, is counteracted by the P-TEFb kinase complex. The polypeptide is Negative elongation factor D (NELFCD) (Pongo abelii (Sumatran orangutan)).